The following is a 1894-amino-acid chain: 1,3-beta-glucan synthase component bgs2 (1894 aa).

Disordered regions lie at residues 1 to 53 (MSWH…DSNK) and 282 to 310 (GPKIKQAKKKQKRKSNKAETEGTNEPETS). A compositionally biased stretch (polar residues) spans 32–51 (EFNNPGEESTYPQANSWNDS). Residues 286–296 (KQAKKKQKRKS) show a composition bias toward basic residues. Helical transmembrane passes span 530-550 (VSLGGAVATLLMLLATIFEWI), 566-586 (FLILILFFILNVAPTVFVFGF), 600-620 (VAIVHFIFSVFTFIYFSLVPL), 655-675 (VSWGLWLLVFGAKFTESYFFL), 710-730 (ILLGIMYVTDLVLFFLDTYLW), 731-751 (YILVNTVFSVARSFFLGISIW), 1338-1358 (IFIMLSVQLFMVVLVNLGGMY), 1394-1414 (CIISIFIVFFISFVPLTVQEL), 1476-1498 (LLFSRFAGPSIYLGSRTLLMLLF), 1503-1525 (VWIPHLIYFWISTLAMCISPFIF), 1598-1618 (FTEIFIPLMLVPLTLVSYFFI), 1637-1657 (ILILAFLPIIVAAVVSMTFAG), 1673-1693 (FGAVLAALAHGITVFMFIIVF), 1697-1717 (WYLEAWCLAKTVLSMLCIIAI), 1778-1798 (DFFLCHLLLFLMLPVLLIPFI), and 1837-1857 (TMFFLLLIAFLALIIIPLVVA).

It belongs to the glycosyltransferase 48 family. In terms of assembly, component of the 1,3-beta-glucan synthase (GS) complex, composed of at least the alternate catalytic subunits bgs1, bgs2, bgs3, and bgs4, and a regulatory subunit chr4.

The protein localises to the prospore membrane. The enzyme catalyses [(1-&gt;3)-beta-D-glucosyl](n) + UDP-alpha-D-glucose = [(1-&gt;3)-beta-D-glucosyl](n+1) + UDP + H(+). Alternate catalytic subunit of the 1,3-beta-glucan synthase (GS) complex. Synthesizes 1,3-beta-glucan, a major structural component of the yeast cell wall. Has a role in ascospore development where it is required for the assembly of a functional spore wall. In Schizosaccharomyces pombe (strain 972 / ATCC 24843) (Fission yeast), this protein is 1,3-beta-glucan synthase component bgs2.